We begin with the raw amino-acid sequence, 271 residues long: 3-methyl-2-oxobutanoate hydroxymethyltransferase (271 aa).

2 residues coordinate Mg(2+): Asp-51 and Asp-90. Residues 51-52 (DS), Asp-90, and Lys-118 contribute to the 3-methyl-2-oxobutanoate site. Glu-120 is a binding site for Mg(2+). Residue Glu-186 is the Proton acceptor of the active site.

This sequence belongs to the PanB family. As to quaternary structure, homodecamer; pentamer of dimers. The cofactor is Mg(2+).

The protein localises to the cytoplasm. It carries out the reaction 3-methyl-2-oxobutanoate + (6R)-5,10-methylene-5,6,7,8-tetrahydrofolate + H2O = 2-dehydropantoate + (6S)-5,6,7,8-tetrahydrofolate. It functions in the pathway cofactor biosynthesis; (R)-pantothenate biosynthesis; (R)-pantoate from 3-methyl-2-oxobutanoate: step 1/2. Catalyzes the reversible reaction in which hydroxymethyl group from 5,10-methylenetetrahydrofolate is transferred onto alpha-ketoisovalerate to form ketopantoate. The protein is 3-methyl-2-oxobutanoate hydroxymethyltransferase of Xanthomonas axonopodis pv. citri (strain 306).